A 310-amino-acid chain; its full sequence is tRNA dimethylallyltransferase (310 aa).

Gly13–Thr20 lines the ATP pocket. Thr15–Thr20 lines the substrate pocket. Interaction with substrate tRNA stretches follow at residues Asp38–Leu41, Gln162–Arg166, Arg243–Arg248, and Lys276–Arg283.

This sequence belongs to the IPP transferase family. In terms of assembly, monomer. The cofactor is Mg(2+).

The catalysed reaction is adenosine(37) in tRNA + dimethylallyl diphosphate = N(6)-dimethylallyladenosine(37) in tRNA + diphosphate. In terms of biological role, catalyzes the transfer of a dimethylallyl group onto the adenine at position 37 in tRNAs that read codons beginning with uridine, leading to the formation of N6-(dimethylallyl)adenosine (i(6)A). The sequence is that of tRNA dimethylallyltransferase from Aliivibrio fischeri (strain ATCC 700601 / ES114) (Vibrio fischeri).